Consider the following 346-residue polypeptide: UDP-N-acetylenolpyruvoylglucosamine reductase (346 aa).

In terms of domain architecture, FAD-binding PCMH-type spans 22–194 (GFDVRARFAC…TSVTFRLPKV (173 aa)). Residue arginine 170 is part of the active site. Residue serine 246 is the Proton donor of the active site. Glutamate 342 is an active-site residue.

This sequence belongs to the MurB family. The cofactor is FAD.

Its subcellular location is the cytoplasm. The enzyme catalyses UDP-N-acetyl-alpha-D-muramate + NADP(+) = UDP-N-acetyl-3-O-(1-carboxyvinyl)-alpha-D-glucosamine + NADPH + H(+). The protein operates within cell wall biogenesis; peptidoglycan biosynthesis. Its function is as follows. Cell wall formation. The protein is UDP-N-acetylenolpyruvoylglucosamine reductase of Paraburkholderia xenovorans (strain LB400).